Reading from the N-terminus, the 653-residue chain is Eukaryotic translation initiation factor 4E-binding protein Mextli (653 aa).

Residues 227 to 292 (YCKDEVVIRN…DKINYAKQLM (66 aa)) enclose the KH domain. 2 disordered regions span residues 311–335 (VGGSCSSLNSSNSDDAIVQPRTPTG) and 515–570 (EGDD…AGTN). 2 stretches are compositionally biased toward low complexity: residues 314–323 (SCSSLNSSNS) and 525–536 (SNGGSSTSNQNG). The span at 546–563 (SRKESTPETKGAREKGDL) shows a compositional bias: basic and acidic residues.

As to quaternary structure, interacts with eukaryotic translation initiation factor eIF4E1. Also interacts with eukaryotic translation initiation factor 3 complex members eif3-S9/eif3b, Int6/eif3e and eIF-3p40/eif3h and with CG3225.

Its subcellular location is the cytoplasm. The protein resides in the cytoplasmic ribonucleoprotein granule. Its function is as follows. Plays a role in promoting translation. The protein is Eukaryotic translation initiation factor 4E-binding protein Mextli of Drosophila melanogaster (Fruit fly).